We begin with the raw amino-acid sequence, 422 residues long: Probable isoprenylcysteine alpha-carbonyl methylesterase ICMEL2 (422 aa).

Over residues 1-16 (MQLSPERCRPMSENRE) the composition is skewed to basic and acidic residues. Residues 1 to 55 (MQLSPERCRPMSENREAWSANSEEMELLHGSNRLSSPEHVRRRVSGNSSEDGSPR) form a disordered region. 2 helical membrane-spanning segments follow: residues 97–117 (LLAL…VAYL) and 152–172 (VVVF…GSLL). Substrate-binding positions include 158–160 (GGA) and 229–231 (QSA). Catalysis depends on residues Ser-230, Asp-331, and His-363.

The protein belongs to the AB hydrolase superfamily. Isoprenylcysteine methylesterase family. Expressed at low levels in flowers and siliques.

It localises to the endoplasmic reticulum membrane. Its subcellular location is the golgi apparatus membrane. It catalyses the reaction [protein]-C-terminal S-[(2E,6E)-farnesyl]-L-cysteine methyl ester + H2O = [protein]-C-terminal S-[(2E,6E)-farnesyl]-L-cysteine + methanol + H(+). Catalyzes the demethylation of isoprenylcysteine methylesters. May act as a negative regulator of ABA signaling. This Arabidopsis thaliana (Mouse-ear cress) protein is Probable isoprenylcysteine alpha-carbonyl methylesterase ICMEL2.